Consider the following 864-residue polypeptide: DNA mismatch repair protein MutS (864 aa).

ATP is bound at residue 607 to 614 (GPNMGGKS).

Belongs to the DNA mismatch repair MutS family.

Its function is as follows. This protein is involved in the repair of mismatches in DNA. It is possible that it carries out the mismatch recognition step. This protein has a weak ATPase activity. The polypeptide is DNA mismatch repair protein MutS (Neisseria meningitidis serogroup C / serotype 2a (strain ATCC 700532 / DSM 15464 / FAM18)).